Reading from the N-terminus, the 644-residue chain is MTSQVSSILSQISSPTDLKKFSLAELSLLAEQMRHKIISVLTNTGGHLASNLGIIELTIALHYVFSSTEDKFIFDVGHQAYPHKLLTGRNTEEFDRIRHDGGLSGFTSPSESIHDLFFSGHAGNALSLALGMAKATEDSRTHILPILGDAAFSCGLTLEALNNISSNLSKFIVVLNDNNMSISQNVGVMSKNLSRWIHHPKFNLFSRKIEKWLTKIPRYGNSISRRSHKLSICLKSLFCPIPIFEQFNLAYMGPVDGHDIKRLISVFQTARDLPFPVLIHVYTTKGKGLEIAQENPEKYHGVTANFNSSKENKFLPTIKPQLTYPDIFGQTVCTLGEAFPNLHIVTPAMSLGSRLEAFKEKFPNRFIDVGIAEGHAVTFSAGIAKAKSPVICSIYSTFLHRALDNVFHDVCLQGLPVILAIDRAGLAYGDGCSHHGIYDLSFLRAMPNMVICQPRSAVVFQQLLQSSLQWNMPVAIRYPNIAATQRDPIATDVHMHRDPGVGEILSQGEDVLILGLGHMCNTALSIKLQLLTHGISATVVDPVFVKPFDNNLFSILLMHHSKVIIIEEHSIRGGLASEFNDFLATYSFKVDVLHFGIPDAFFAHGDKESLLKRVGLDTESMVKRILTHFNFRTKTSPSNKLSIV.

Thiamine diphosphate is bound by residues H78 and 120-122 (GHA). D149 contributes to the Mg(2+) binding site. Residues 150–151 (AA), N178, and E373 each bind thiamine diphosphate. Mg(2+) is bound at residue N178.

This sequence belongs to the transketolase family. DXPS subfamily. Homodimer. It depends on Mg(2+) as a cofactor. Requires thiamine diphosphate as cofactor.

It carries out the reaction D-glyceraldehyde 3-phosphate + pyruvate + H(+) = 1-deoxy-D-xylulose 5-phosphate + CO2. It functions in the pathway metabolic intermediate biosynthesis; 1-deoxy-D-xylulose 5-phosphate biosynthesis; 1-deoxy-D-xylulose 5-phosphate from D-glyceraldehyde 3-phosphate and pyruvate: step 1/1. In terms of biological role, catalyzes the acyloin condensation reaction between C atoms 2 and 3 of pyruvate and glyceraldehyde 3-phosphate to yield 1-deoxy-D-xylulose-5-phosphate (DXP). The protein is 1-deoxy-D-xylulose-5-phosphate synthase of Chlamydia caviae (strain ATCC VR-813 / DSM 19441 / 03DC25 / GPIC) (Chlamydophila caviae).